Consider the following 58-residue polypeptide: Small ribosomal subunit protein eS30 (58 aa).

The interval 1 to 58 (MGKVHGSLARAGKVKNQTPKVPKLDKKKRLTGRAKKRQLYNRRFSDNGGRKKGPNSKA) is disordered. Basic residues predominate over residues 25–40 (DKKKRLTGRAKKRQLY).

This sequence belongs to the eukaryotic ribosomal protein eS30 family. In terms of assembly, component of the small ribosomal subunit. Mature ribosomes consist of a small (40S) and a large (60S) subunit. The 40S subunit contains about 32 different proteins and 1 molecule of RNA (18S). The 60S subunit contains about 42 different proteins and 3 molecules of RNA (28S, 5.8S and 5S).

It is found in the cytoplasm. Component of the ribosome, a large ribonucleoprotein complex responsible for the synthesis of proteins in the cell. The small ribosomal subunit (SSU) binds messenger RNAs (mRNAs) and translates the encoded message by selecting cognate aminoacyl-transfer RNA (tRNA) molecules. The large subunit (LSU) contains the ribosomal catalytic site termed the peptidyl transferase center (PTC), which catalyzes the formation of peptide bonds, thereby polymerizing the amino acids delivered by tRNAs into a polypeptide chain. The nascent polypeptides leave the ribosome through a tunnel in the LSU and interact with protein factors that function in enzymatic processing, targeting, and the membrane insertion of nascent chains at the exit of the ribosomal tunnel. This chain is Small ribosomal subunit protein eS30, found in Plasmodium falciparum (isolate 3D7).